Reading from the N-terminus, the 361-residue chain is MTVVVGVLQIDDMGKKSSFASWWKQLRVKKSDDNKLFGLSLTRALEVSKVAIFLTRRDGEKVFYGYIPAVVAKCGFFLKQNATQVKGIFRVNGSSKRIQILQKAFSTGPDYGRSFDWEGYTVHDAANVFRRFINLMPEHVIPLEYYERFREPMTIPNLTDNERVEMYRRRIDELPIPNRQLLLYLLDLLSVFAMNSSKNLMTADNLAAIFQPGILSHPDHEVYSKDYQISQTALLFLINHQGSFIKTIPLSSLPPLVAAPTSPNTSSTLITQSAAPTPIASTSIRINSFNPRNGSIKRWRSFSRHSSATYSNSPSSNFSNMKSSEVDPGSPPRIKSRSYSLSRSSSMKLFHTLDRRRENRM.

The 194-residue stretch at Ile-52–Ile-245 folds into the Rho-GAP domain. The span at Ser-306–Ser-323 shows a compositional bias: low complexity. The interval Ser-306–Ser-345 is disordered.

It localises to the membrane. Functionally, GTPase-activating protein for Rho1. Has a role in the negative regulation of (1-3)beta-D-glucan synthase activity and cell integrity. The protein is Rho-GTPase-activating protein 5 (rga5) of Schizosaccharomyces pombe (strain 972 / ATCC 24843) (Fission yeast).